The following is a 650-amino-acid chain: Methionine--tRNA ligase (650 aa).

The 'HIGH' region motif lies at 11-21; it reads YYVNDIPHIGH. Zn(2+) contacts are provided by Cys126, Cys129, Cys147, and Cys150. Positions 301–305 match the 'KMSKS' region motif; the sequence is KMSKS. Lys304 contributes to the ATP binding site. Residues 513 to 535 are disordered; sequence EKTEKAGEASPEKNEKEKKDAKE. One can recognise a tRNA-binding domain in the interval 549-650; that stretch reads DFKKVEIKVG…REKIAGSLIS (102 aa).

Belongs to the class-I aminoacyl-tRNA synthetase family. MetG type 2A subfamily. As to quaternary structure, homodimer. Zn(2+) is required as a cofactor.

It localises to the cytoplasm. It catalyses the reaction tRNA(Met) + L-methionine + ATP = L-methionyl-tRNA(Met) + AMP + diphosphate. Its function is as follows. Is required not only for elongation of protein synthesis but also for the initiation of all mRNA translation through initiator tRNA(fMet) aminoacylation. This is Methionine--tRNA ligase (metG) from Helicobacter pylori (strain ATCC 700392 / 26695) (Campylobacter pylori).